A 476-amino-acid polypeptide reads, in one-letter code: Sulfite exporter TauE/SafE family protein 3 (476 aa).

12 helical membrane passes run 8-28 (WLGL…FAFV), 76-92 (FNWQ…FGAA), 99-115 (VGGG…IIGF), 120-142 (ATAI…NLRL), 151-171 (IIDY…ISIG), 172-192 (VAFN…VLFL), 257-277 (VYWK…ALQI), 291-311 (VINL…AVAL), 339-359 (FGII…FIMG), 360-380 (PLFL…TFAM), 397-417 (FPVP…WVGQ), and 433-453 (IIFI…GVGI).

Belongs to the 4-toluene sulfonate uptake permease (TSUP) (TC 2.A.102) family.

It is found in the membrane. The sequence is that of Sulfite exporter TauE/SafE family protein 3 from Arabidopsis thaliana (Mouse-ear cress).